The following is a 397-amino-acid chain: Phosphoglycerate kinase (397 aa).

Substrate contacts are provided by residues D21–N23, R36, H59–R62, R118, and R151. ATP-binding positions include K201, E323, and G353–T356.

It belongs to the phosphoglycerate kinase family. As to quaternary structure, monomer.

The protein resides in the cytoplasm. The enzyme catalyses (2R)-3-phosphoglycerate + ATP = (2R)-3-phospho-glyceroyl phosphate + ADP. Its pathway is carbohydrate degradation; glycolysis; pyruvate from D-glyceraldehyde 3-phosphate: step 2/5. This chain is Phosphoglycerate kinase, found in Bartonella quintana (strain Toulouse) (Rochalimaea quintana).